The chain runs to 609 residues: MSDIIAYKVDGEIVDTQSFKSLKNVKNAEEIYFDNSEDALKVIRHSCAHLMAQAILALYPNAKFFVGPAIEDGFYYDFRVTKENGEKLGKEDLQAIEKKMKEFIDAKEEIAKICSTKSEIANEFKNDDLKQEVLKRIPDGEVSVYKQGDFKDICRGPHVPNTKFLRFFKLTRVAGAYLGGDEKREMLTRIYGTAFADKENLNEYLRILEEAKKRDHRIIGNEMKLFTFDDQIGAGLPVWLPNGARMRSKLEKILFGVHRRRGYEPVRGPEILKADAWKISGHYTNYKENMYFTKIDEQEYGIKPMNCVGHIKVYQSEIRSYRDLPLKFFEYGVVHRHEKSGVMHGLFRVREFTQDDAHIFCMPSQIKENVLEILDFVDKIMKNFGFSYEMEISTKPEKAIGDDKVWEIATNALKEALDENGFKYGIDEGGGAFYGPKIDIKITDALKRKWQCGTIQVDFNLPSRFDLGYIDENNERKQPVMLHRAILGSFERFIGILIEHTAGELPFFIAPTGVSIIPINDAHLNYAKEVQKALANLEVDSEILSKNETLNKRIRTAEKGRVPMILVLGDNEVKNRSVALRDRRARAQSNLSLDEFLEFVKNKLNEVNF.

The catalytic stretch occupies residues 215 to 506 (DHRIIGNEMK…LIEHTAGELP (292 aa)). Residues Cys307, His358, and His483 each coordinate Zn(2+).

This sequence belongs to the class-II aminoacyl-tRNA synthetase family. As to quaternary structure, homodimer. The cofactor is Zn(2+).

It localises to the cytoplasm. It catalyses the reaction tRNA(Thr) + L-threonine + ATP = L-threonyl-tRNA(Thr) + AMP + diphosphate + H(+). Catalyzes the attachment of threonine to tRNA(Thr) in a two-step reaction: L-threonine is first activated by ATP to form Thr-AMP and then transferred to the acceptor end of tRNA(Thr). Also edits incorrectly charged L-seryl-tRNA(Thr). This chain is Threonine--tRNA ligase, found in Campylobacter hominis (strain ATCC BAA-381 / DSM 21671 / CCUG 45161 / LMG 19568 / NCTC 13146 / CH001A).